The following is a 340-amino-acid chain: Phenylalanine--tRNA ligase alpha subunit (340 aa).

Residue glutamate 255 participates in Mg(2+) binding.

This sequence belongs to the class-II aminoacyl-tRNA synthetase family. Phe-tRNA synthetase alpha subunit type 1 subfamily. Tetramer of two alpha and two beta subunits. Mg(2+) serves as cofactor.

It localises to the cytoplasm. The catalysed reaction is tRNA(Phe) + L-phenylalanine + ATP = L-phenylalanyl-tRNA(Phe) + AMP + diphosphate + H(+). The protein is Phenylalanine--tRNA ligase alpha subunit of Syntrophomonas wolfei subsp. wolfei (strain DSM 2245B / Goettingen).